The chain runs to 1165 residues: Valine--tRNA ligase (1165 aa).

The 'HIGH' region signature appears at 43-53; it reads PNVTGSLHMGH. A 'KMSKS' region motif is present at residues 800 to 804; that stretch reads KMSKT. Residue lysine 803 coordinates ATP. Coiled coils occupy residues 1001–1032 and 1097–1165; these read KNED…SDLQ and HVDL…VLRS.

This sequence belongs to the class-I aminoacyl-tRNA synthetase family. ValS type 1 subfamily. Monomer.

It localises to the cytoplasm. The enzyme catalyses tRNA(Val) + L-valine + ATP = L-valyl-tRNA(Val) + AMP + diphosphate. Its function is as follows. Catalyzes the attachment of valine to tRNA(Val). As ValRS can inadvertently accommodate and process structurally similar amino acids such as threonine, to avoid such errors, it has a 'posttransfer' editing activity that hydrolyzes mischarged Thr-tRNA(Val) in a tRNA-dependent manner. This Aquifex aeolicus (strain VF5) protein is Valine--tRNA ligase.